We begin with the raw amino-acid sequence, 495 residues long: MKSSVEQQSATRVKLTVEVPFDELQPEIDQAYRSLAQQVTLPGFRKGKVPPRVLEARLGRGAILDQAINNMLPSRYSQAVEEHDLKVLTQPTIDITRLEDNELVEFTAEADVRPEIDLPDFSTIEVEVDPLVADDAAVDAELDNLRARFGTLKAVERPVQKDDFVSIDLSATVGGEPVDEATTEGLSHQVGNGELIEGLDDALEGMKVDESKTFKSNLVAGDHEGEEAEVTVTVKSLKERELPEADDDFAQLASEFDTIGELRESLAKQVEENKKAEQASSIRDKVLEKALEKTDFELPEAVVEEQVKGQLNQLLQQFNGDEKAFDQLLAAQGSSREQFDRDTRSSAEEAVRTQLFLDTLADELQPEVSQQEFTEHIMFTAQRYGMEPQQFMQAIQASDQIGALYADVRRGKALAESICTVSVKDTDGNEIDPKEYFGEEENTDETSTGSADAEASENSEATPSGTETEESAEFDQAAEAPVATPTDDDSENAEK.

The region spanning 162-243 (DDFVSIDLSA…VKSLKERELP (82 aa)) is the PPIase FKBP-type domain. Over residues 425–437 (DTDGNEIDPKEYF) the composition is skewed to basic and acidic residues. A disordered region spans residues 425–495 (DTDGNEIDPK…TDDDSENAEK (71 aa)). Positions 450 to 461 (SADAEASENSEA) are enriched in low complexity. The segment covering 486–495 (TDDDSENAEK) has biased composition (acidic residues).

The protein belongs to the FKBP-type PPIase family. Tig subfamily.

It localises to the cytoplasm. The enzyme catalyses [protein]-peptidylproline (omega=180) = [protein]-peptidylproline (omega=0). Its function is as follows. Involved in protein export. Acts as a chaperone by maintaining the newly synthesized protein in an open conformation. Functions as a peptidyl-prolyl cis-trans isomerase. The chain is Trigger factor from Corynebacterium kroppenstedtii (strain DSM 44385 / JCM 11950 / CIP 105744 / CCUG 35717).